Consider the following 564-residue polypeptide: Rhodopsin kinase GRK1 (564 aa).

The segment at 1–15 (MDFGSLETVVANSAF) is interaction with RCVRN. Residues 1-189 (MDFGSLETVV…LEAQPIGEDW (189 aa)) form an N-terminal region. S5 is modified (phosphoserine). Position 8 is a phosphothreonine (T8). The residue at position 21 (S21) is a Phosphoserine; by PKA and autocatalysis. Positions 58-175 (FDNLCSEQPI…LGSLYFLRFL (118 aa)) constitute an RGS domain. Residues 190–455 (FLDFRVLGKG…CDALRANVLF (266 aa)) form the Protein kinase domain. Residues 196 to 204 (LGKGGFGEV) and K219 contribute to the ATP site. D317 acts as the Proton acceptor in catalysis. The AGC-kinase C-terminal domain maps to 456–521 (KDISWRQLEA…GNCSIPWQEE (66 aa)). The interval 456–564 (KDISWRQLEA…TAKSGMCLIS (109 aa)) is C-terminal. The residue at position 491 (S491) is a Phosphoserine; by autocatalysis. T492 carries the phosphothreonine; by autocatalysis modification. Cysteine methyl ester is present on C561. A lipid anchor (S-farnesyl cysteine) is attached at C561. The propeptide at 562 to 564 (LIS) is removed in mature form.

Belongs to the protein kinase superfamily. AGC Ser/Thr protein kinase family. GPRK subfamily. In terms of assembly, interacts (via N-terminus) with RCVRN (via C-terminus); the interaction is Ca(2+)-dependent. Interacts (when prenylated) with PDE6D; this promotes release from membranes. May form a complex composed of RHO, GRK1 and RCVRN in a Ca(2+)-dependent manner; RCVRN prevents the interaction between GRK1 and RHO. Post-translationally, autophosphorylated, Ser-21 is a minor site of autophosphorylation compared to Ser-491 and Thr-492. Phosphorylation at Ser-21 is regulated by light and activated by cAMP. Farnesylation is required for full activity. As to expression, detected in retina (at protein level). Retina-specific. Expressed in rod and cone photoreceptor cells.

Its subcellular location is the membrane. The protein resides in the cell projection. It localises to the cilium. The protein localises to the photoreceptor outer segment. It carries out the reaction L-threonyl-[rhodopsin] + ATP = O-phospho-L-threonyl-[rhodopsin] + ADP + H(+). It catalyses the reaction L-seryl-[rhodopsin] + ATP = O-phospho-L-seryl-[rhodopsin] + ADP + H(+). Its activity is regulated as follows. Inhibited by RCVRN, which prevents the interaction between GRK1 and RHO. Inhibition is calcium-dependent. Retina-specific kinase involved in the signal turnoff via phosphorylation of rhodopsin (RHO), the G protein- coupled receptor that initiates the phototransduction cascade. This rapid desensitization is essential for scotopic vision and permits rapid adaptation to changes in illumination. May play a role in the maintenance of the outer nuclear layer in the retina. This chain is Rhodopsin kinase GRK1, found in Rattus norvegicus (Rat).